A 352-amino-acid polypeptide reads, in one-letter code: MKEQLNQLSAYQPGLSPRALKEKYGIEGDLYKLASNENLYGPSPKVKEAISAHLDELYYYPETGSPTLKAAISKHLNVDQSRILFGAGLDEVILMISRAVLTPGDTIVTSEATFGQYYHNAIVESANVIQVPLKDGGFDLDGILKEVNDDTSLVWLCNPNNPTGTYFNHESLDSFLSQVPSHVPVLIDEAYFEFVTAEDYPDTLALQQKYDNAFLLRTFSKAYGLAGLRVGYVVASEHAIEKWNIIRPPFNVTRISEYAAVAALEDQQYLKEVTHKNSVERERFYQLPQSEHFLPSQTNFIFVKTKRVNELYEALLNVGCITRPFPTGVRITIGFKEQNGKMLEVLSNFKYE.

At K221 the chain carries N6-(pyridoxal phosphate)lysine.

It belongs to the class-II pyridoxal-phosphate-dependent aminotransferase family. Histidinol-phosphate aminotransferase subfamily. Homodimer. The cofactor is pyridoxal 5'-phosphate.

The catalysed reaction is L-histidinol phosphate + 2-oxoglutarate = 3-(imidazol-4-yl)-2-oxopropyl phosphate + L-glutamate. It functions in the pathway amino-acid biosynthesis; L-histidine biosynthesis; L-histidine from 5-phospho-alpha-D-ribose 1-diphosphate: step 7/9. The sequence is that of Histidinol-phosphate aminotransferase from Staphylococcus aureus (strain MRSA252).